Consider the following 708-residue polypeptide: Ion-translocating oxidoreductase complex subunit C (708 aa).

2 4Fe-4S ferredoxin-type domains span residues 369 to 397 and 407 to 436; these read GEPQ…QQLY and KATT…VQYF. [4Fe-4S] cluster is bound by residues C377, C380, C383, C387, C416, C419, C422, and C426. Residues 630–682 form a disordered region; it reads AKARKLEQQQANAEPEEQIDPRKAAVEAAIARAKARKLEQQQANAEPEEQIDP.

This sequence belongs to the 4Fe4S bacterial-type ferredoxin family. RnfC subfamily. The complex is composed of six subunits: RsxA, RsxB, RsxC, RsxD, RsxE and RsxG. [4Fe-4S] cluster serves as cofactor.

It localises to the cell inner membrane. In terms of biological role, part of a membrane-bound complex that couples electron transfer with translocation of ions across the membrane. Required to maintain the reduced state of SoxR. In Escherichia coli O1:K1 / APEC, this protein is Ion-translocating oxidoreductase complex subunit C.